Reading from the N-terminus, the 124-residue chain is Large ribosomal subunit protein bL12 (124 aa).

Belongs to the bacterial ribosomal protein bL12 family. In terms of assembly, homodimer. Part of the ribosomal stalk of the 50S ribosomal subunit. Forms a multimeric L10(L12)X complex, where L10 forms an elongated spine to which 2 to 4 L12 dimers bind in a sequential fashion. Binds GTP-bound translation factors.

In terms of biological role, forms part of the ribosomal stalk which helps the ribosome interact with GTP-bound translation factors. Is thus essential for accurate translation. This Desulforamulus reducens (strain ATCC BAA-1160 / DSM 100696 / MI-1) (Desulfotomaculum reducens) protein is Large ribosomal subunit protein bL12.